A 93-amino-acid chain; its full sequence is RNA silencing suppressor (93 aa).

A basic region spans residues 44 to 47; the sequence is CKRR. The C4-type zinc-finger motif lies at 54-69; that stretch reads CWRCYRVYPPVCNSKC.

The protein belongs to the carlaviruses nucleic acid-binding protein family.

In terms of biological role, suppressor of viral-induced RNA silencing. The potential mechanism of action is based on sequestering siRNAs. In Solanum tuberosum (Potato), this protein is RNA silencing suppressor.